The chain runs to 279 residues: Small ribosomal subunit protein uS2 (279 aa).

Residues R232–E279 are disordered. Basic and acidic residues predominate over residues E252 to E271.

Belongs to the universal ribosomal protein uS2 family.

The polypeptide is Small ribosomal subunit protein uS2 (Salinispora arenicola (strain CNS-205)).